We begin with the raw amino-acid sequence, 574 residues long: Multidrug and toxin extrusion protein 1 (574 aa).

The Cytoplasmic portion of the chain corresponds to 1–51 (MEGQAAETNHRAETVVRAELCLSAEQGPETTAYSQKRCLFLPMEVWQEAQQ). The helical transmembrane segment at 52 to 72 (LLALAAPAFLSQLMIFLISIV) threads the bilayer. Topologically, residues 73–86 (SSIFCGHLGKVELD) are extracellular. Residues 87–107 (AVSLAITIINITGVAVGTGLA) form a helical membrane-spanning segment. At 108–133 (GACDTLISQTFGGSNLKLVGIILQRG) the chain is on the cytoplasmic side. A helical membrane pass occupies residues 134–154 (ILILLLFCFPCWALLINTESI). At 155-168 (LLLFRQDPEVSKLT) the chain is on the extracellular side. A helical transmembrane segment spans residues 169 to 189 (QIYVLIFLPALPAAFLYQLLA). Residues 190 to 204 (KYLQNQGIIYPQVLT) lie on the Cytoplasmic side of the membrane. The helical transmembrane segment at 205 to 225 (GFIANIFNALFNYILLYVLGL) threads the bilayer. The Extracellular portion of the chain corresponds to 226–230 (GVMGS). A helical transmembrane segment spans residues 231 to 251 (ACANTVSQFIQMILLFLYIVW). Residues 252-271 (RRLYADTWGGWSQACFEEWG) are Cytoplasmic-facing. A helical transmembrane segment spans residues 272–291 (AFIRLAVASMLMLCIEWWAF). The Extracellular segment spans residues 292 to 309 (EISMFLAGVLGMVDLAAQ). Residues 310 to 330 (AIIYQVAIVVYLIPLGLCIAG) form a helical membrane-spanning segment. Residues 331–350 (SIRVGHGLGAGNTEQAKRSA) are Cytoplasmic-facing. Residues 351–371 (LVVLCMTELCALLSGILLATL) form a helical membrane-spanning segment. Over 372 to 384 (KDVVAYIFTSDPN) the chain is Extracellular. The helical transmembrane segment at 385 to 405 (IVALVSYVLPVYSACLLFDAC) threads the bilayer. At 406–430 (VAACGGILRGSGKLKVGAISHTVGY) the chain is on the cytoplasmic side. Residues 431–451 (YVIGLPLGISLMFAAKLGIIG) traverse the membrane as a helical segment. Residues 452–453 (FW) lie on the Extracellular side of the membrane. A helical transmembrane segment spans residues 454 to 472 (FGILACGIAQSIFLIIFVF). The Cytoplasmic portion of the chain corresponds to 473–549 (KIDWKRASEE…AGAAQHTRTL (77 aa)). Residues 500–541 (KPSVYQEGCPTEQGDVDPGNVESIEFSQSSTSSEGTSPTPAG) are disordered. The span at 521 to 538 (ESIEFSQSSTSSEGTSPT) shows a compositional bias: low complexity. Residues 550–570 (ILTRGLALGCAVGTLIIGIVI) traverse the membrane as a helical segment. Topologically, residues 571–574 (RLSV) are extracellular.

The protein belongs to the multi antimicrobial extrusion (MATE) (TC 2.A.66.1) family.

It is found in the cell membrane. The protein localises to the apical cell membrane. The enzyme catalyses thiamine(out) + H(+)(in) = thiamine(in) + H(+)(out). It catalyses the reaction estrone 3-sulfate(in) + H(+)(out) = estrone 3-sulfate(out) + H(+)(in). It carries out the reaction creatinine(in) + H(+)(out) = creatinine(out) + H(+)(in). The catalysed reaction is agmatine(in) + H(+)(out) = agmatine(out) + H(+)(in). Multidrug efflux pump that functions as a H(+)/organic cation antiporter. Mediates the secretion of cationic compounds including drugs, toxins and endogenous metabolites. Plays a role physiological role in the excretion of drugs, toxins and endogenous metabolites through the kidney and liver, into urine and bile respectively. The protein is Multidrug and toxin extrusion protein 1 (slc47a1) of Xenopus tropicalis (Western clawed frog).